Consider the following 335-residue polypeptide: Nucleoid-associated protein PC1_1634 (335 aa).

Belongs to the YejK family.

The protein localises to the cytoplasm. It localises to the nucleoid. The polypeptide is Nucleoid-associated protein PC1_1634 (Pectobacterium carotovorum subsp. carotovorum (strain PC1)).